We begin with the raw amino-acid sequence, 882 residues long: Lon protease homolog, mitochondrial (882 aa).

Residues 1–34 constitute a mitochondrion transit peptide; the sequence is MIHVLKSRSTLLTASSIVRTSVGSSSRYSQTRTY. The Lon N-terminal domain maps to 68–281; that stretch reads TLGLPLVSRP…KALVLLNRER (214 aa). 435-442 serves as a coordination point for ATP; the sequence is GPPGTGKT. The Lon proteolytic domain maps to 687 to 878; that stretch reads PLPHGIVMGL…DKVYEVAFSS (192 aa). Residues S784 and K827 contribute to the active site.

This sequence belongs to the peptidase S16 family. In terms of assembly, homohexamer or homoheptamer. Organized in a ring with a central cavity.

The protein resides in the mitochondrion matrix. The catalysed reaction is Hydrolysis of proteins in presence of ATP.. In terms of biological role, ATP-dependent serine protease that mediates the selective degradation of misfolded, unassembled or oxidatively damaged polypeptides as well as certain short-lived regulatory proteins in the mitochondrial matrix. May also have a chaperone function in the assembly of inner membrane protein complexes. Participates in the regulation of mitochondrial gene expression and in the maintenance of the integrity of the mitochondrial genome. Binds to mitochondrial DNA in a site-specific manner. The polypeptide is Lon protease homolog, mitochondrial (Phaeodactylum tricornutum (strain CCAP 1055/1)).